The chain runs to 89 residues: UPF0335 protein RPC_3979 (89 aa).

The protein belongs to the UPF0335 family.

This is UPF0335 protein RPC_3979 from Rhodopseudomonas palustris (strain BisB18).